Consider the following 377-residue polypeptide: MAEGNHRKKPLKVLESLGKDFLTGVLDNLVEQNVLNWKEEEKKKYYDAKTEDKVRVMADSMQEKQRMAGQMLLQTFFNIDQISPNKKAHPNMEAGPPESGESTDALKLCPHEEFLRLCKERAEEIYPIKERNNRTRLALIICNTEFDHLPPRNGADFDITGMKELLEGLDYSVDVEENLTARDMESALRAFATRPEHKSSDSTFLVLMSHGILEGICGTVHDEKKPDVLLYDTIFQIFNNRNCLSLKDKPKVIIVQACRGANRGELWVRDSPASLEVASSQSSENLEEDAVYKTHVEKDFIAFCSSTPHNVSWRDSTMGSIFITQLITCFQKYSWCCHLEEVFRKVQQSFETPRAKAQMPTIERLSMTRYFYLFPGN.

The required for LPS-binding stretch occupies residues methionine 1 to aspartate 59. Positions methionine 1–aspartate 80 are excised as a propeptide. The CARD domain occupies methionine 1–asparagine 91. Alanine 2 is subject to N-acetylalanine. Position 83 is a phosphoserine (serine 83). The segment at proline 84–aspartate 104 is disordered. Active-site residues include histidine 210 and cysteine 258. Positions serine 271–aspartate 289 are excised as a propeptide. A (Microbial infection) ADP-riboxanated arginine modification is found at arginine 314.

Belongs to the peptidase C14A family. As to quaternary structure, heterotetramer that consists of two anti-parallel arranged heterodimers, each one formed by a 20 kDa (Caspase-4 subunit p20) and a 10 kDa (Caspase-4 subunit p10) subunit. Upon direct LPS-binding, forms large homooligomers, resulting in its activation. These oligomers are often referred to as 'non-canonical inflammasomes'. In its precursor form, interacts with TMEM214; this interaction is required for association with the endoplasmic reticulum membrane. Interacts with CASP1. Interacts with NOD2. Interacts with SERPINB1; this interaction regulates CASP4 activity. Heterotetramer that consists of two anti-parallel arranged heterodimers, each one formed by a 20 kDa (Caspase-4 subunit p20) and a 10 kDa (Caspase-4 subunit p10) subunit. In terms of assembly, (Microbial infection) Interacts with NleF protein from pathogenic E.coli; this interaction leads to enzyme inhibition. As to quaternary structure, (Microbial infection) Interacts with cathepsin CTSG; the interaction is promoted by the Td92 surface protein of the periodontal pathogen T.denticola and leads to CASP4 activation. In response to activation signals, undergoes autoproteolytic cleavage and activation. Post-translationally, (Microbial infection) ADP-riboxanation by S.flexneri OspC3 blocks CASP4 autoprocessing, preventing CASP4 activation and ability to recognize and cleave GSDMD, thereby thwarting the inflammasome/pyroptosis-mediated defense. Widely expressed, including in keratinocytes and colonic and small intestinal epithelial cells (at protein level). Not detected in brain.

Its subcellular location is the cytoplasm. It is found in the cytosol. It localises to the endoplasmic reticulum membrane. The protein resides in the mitochondrion. The protein localises to the inflammasome. Its subcellular location is the secreted. It carries out the reaction Strict requirement for Asp at the P1 position. It has a preferred cleavage sequence of Tyr-Val-Ala-Asp-|- but also cleaves at Asp-Glu-Val-Asp-|-.. Activated by homooligomerization induced by direct binding to cytosolic LPS, in a TLR4-independent manner. In addition to LPS, CASP4/CASP11 may also be activated by oxidized phospholipid 1-palmitoyl-2-arachidonoyl- sn-glycero-3-phosphorylcholine, an oxidized phospholipid (oxPAPC), in dendritic cells, promoting adaptive immunity. The role of oxPAPC is however unclear and another report suggests that oxPAPC competes with LPS-binding and inhibits the non-canonical inflammasome in macrophages. Functionally, inflammatory caspase that acts as the effector of the non-canonical inflammasome by mediating lipopolysaccharide (LPS)-induced pyroptosis. Also indirectly activates the NLRP3 and NLRP6 inflammasomes. Acts as a thiol protease that cleaves a tetrapeptide after an Asp residue at position P1: catalyzes cleavage of CGAS, GSDMD and IL18. Effector of the non-canonical inflammasome independently of NLRP3 inflammasome and CASP1: the non-canonical inflammasome promotes pyroptosis through GSDMD cleavage without involving secretion of cytokine IL1B. In the non-canonical inflammasome, CASP4 is activated by direct binding to the lipid A moiety of LPS without the need of an upstream sensor. LPS-binding promotes CASP4 activation and CASP4-mediated cleavage of GSDMD and IL18, followed by IL18 secretion through the GSDMD pore, pyroptosis of infected cells and their extrusion into the gut lumen. Also indirectly promotes secretion of mature cytokines (IL1A and HMGB1) downstream of GSDMD-mediated pyroptosis via activation of the NLRP3 and NLRP6 inflammasomes. Involved in NLRP3-dependent CASP1 activation and IL1B secretion in response to non-canonical activators, such as UVB radiation or cholera enterotoxin. Involved in NLRP6 inflammasome-dependent activation in response to lipoteichoic acid (LTA), a cell-wall component of Gram-positive bacteria, which leads to CASP1 activation and IL1B secretion. Involved in LPS-induced IL6 secretion; this activity may not require caspase enzymatic activity. The non-canonical inflammasome is required for innate immunity to cytosolic, but not vacuolar, bacteria. Plays a crucial role in the restriction of S.typhimurium replication in colonic epithelial cells during infection. Activation of the non-canonical inflammasome in brain endothelial cells can lead to excessive pyroptosis, leading to blood-brain barrier breakdown. Pyroptosis limits bacterial replication, while cytokine secretion promotes the recruitment and activation of immune cells and triggers mucosal inflammation. May also act as an activator of adaptive immunity in dendritic cells, following activation by oxidized phospholipid 1-palmitoyl-2-arachidonoyl- sn-glycero-3-phosphorylcholine, an oxidized phospholipid (oxPAPC). Involved in cell death induced by endoplasmic reticulum stress and by treatment with cytotoxic APP peptides found in Alzheimer's patient brains. Cleavage of GSDMD is not strictly dependent on the consensus cleavage site but depends on an exosite interface on CASP4 that recognizes and binds the Gasdermin-D, C-terminal (GSDMD-CT) part. Catalyzes cleavage and maturation of IL18; IL18 processing also depends of the exosite interface on CASP4. In contrast, it does not directly process IL1B. During non-canonical inflammasome activation, cuts CGAS and may play a role in the regulation of antiviral innate immune activation. In terms of biological role, (Microbial infection) In response to the Td92 surface protein of the periodontal pathogen T.denticola, activated by cathepsin CTSG which leads to production and secretion of IL1A and pyroptosis of gingival fibroblasts. This is Caspase-4 from Homo sapiens (Human).